Here is an 85-residue protein sequence, read N- to C-terminus: Putative sodium channel toxin Ts34 (85 aa).

The first 17 residues, 1–17, serve as a signal peptide directing secretion; the sequence is MNLPLLLLITILIEIHA. The LCN-type CS-alpha/beta domain occupies 19 to 82; the sequence is KDGYVIYKNS…IYGETGSYCW (64 aa). 4 disulfides stabilise this stretch: Cys-30–Cys-81, Cys-34–Cys-57, Cys-43–Cys-62, and Cys-47–Cys-64.

Belongs to the long (4 C-C) scorpion toxin superfamily. Sodium channel inhibitor family. Expressed by the venom gland.

The protein resides in the secreted. Functionally, putative sodium channel toxin. This chain is Putative sodium channel toxin Ts34, found in Tityus serrulatus (Brazilian scorpion).